The following is a 413-amino-acid chain: MKCGWREGNQIQLLENGDQFYPAVFEAIAQAQQKIILETFILFEDEVGKKLHTALLKAAQRGVKAEVLLDGYGSPDLSDAFVGELTSAGVIFRYYDPRPRLLGLRTNIFRRMHRKIVVIDDRIAFVGGINYSAEHMSDYGPQAKQDYAVRVEGPVVADILQFEVENLPGQSPARRWWKRHHQAEENRHPGEAQALFVWRDNEEHRDDIERHYLKMLTQAKREVIIANAYFFPGYRLLHAMRKAARRGVSVKLIVQGEPDMPIVKVGARLLYNYLVKGGVQVYEYRRRPLHGKVALMDDHWATVGSSNLDPLSLSLNLEANLIIHDRTFNQTLRDNLQGIIVNDCKQVDESMLPKRTWWNLTKSVLAFHFLRHFPALVGWLPAHTPHLAQVPPPAQPEMETQDRVDPENTGVKP.

PLD phosphodiesterase domains are found at residues 108 to 135 (IFRR…SAEH) and 285 to 312 (RRRP…DPLS). Active-site residues include H113, K115, D120, H290, K292, and D297. The interval 388 to 413 (AQVPPPAQPEMETQDRVDPENTGVKP) is disordered.

Belongs to the phospholipase D family. Cardiolipin synthase subfamily. ClsB sub-subfamily.

It localises to the cell membrane. The enzyme catalyses 2 a 1,2-diacyl-sn-glycero-3-phospho-(1'-sn-glycerol) = a cardiolipin + glycerol. Its function is as follows. Catalyzes the phosphatidyl group transfer from one phosphatidylglycerol molecule to another to form cardiolipin (CL) (diphosphatidylglycerol) and glycerol. The sequence is that of Cardiolipin synthase B from Salmonella typhimurium (strain LT2 / SGSC1412 / ATCC 700720).